Here is a 132-residue protein sequence, read N- to C-terminus: MSTRPEEAGNIKVGSFIVIDGEPCKVVEVEKSKTGKHGSAKARIVGIGFFDGGKRSIVVPTDARVEVPIIKKFTAQVVAFVGDNVQLMNLEDYSTFEIPMPQEEEIKSKLSEGVEVEVWEVMGRHKIMRVRA.

Lys-36 is modified (hypusine).

This sequence belongs to the eIF-5A family.

The protein localises to the cytoplasm. In terms of biological role, functions by promoting the formation of the first peptide bond. This Thermofilum pendens (strain DSM 2475 / Hrk 5) protein is Translation initiation factor 5A (eIF5A).